The chain runs to 363 residues: MDKYELVKDIGAGNFGVARLMKVKNSKELVAMKYIERGPKIDENVAREIINHRSLRHPNIIRFKEVVLTPTHLAIAMEYAAGGELFERICSAGRFSEDEARYFFQQLISGVSYCHAMQICHRDLKLENTLLDGSPAPRLKICDFGYSKSSLLHSRPKSTVGTPAYIAPEVLSRREYDGKMADVWSCGVTLYVMLVGAYPFEDQEDPKNFRKTIQKIMAVQYKIPDYVHISQDCKNLLSRIFVANSLKRITIAEIKKHSWFLKNLPRELTETAQAAYFKKENPTFSLQTVEEIMKIVADAKTPPPVSRSIGGFGWGGNGDADGKEEDAEDVEEEEEEVEEEEDDEDEYDKTVKEVHASGEVRIS.

A Protein kinase domain is found at 4-260 (YELVKDIGAG…IAEIKKHSWF (257 aa)). ATP contacts are provided by residues 10-18 (IGAGNFGVA) and lysine 33. Aspartate 123 serves as the catalytic Proton acceptor. A disordered region spans residues 306–363 (SRSIGGFGWGGNGDADGKEEDAEDVEEEEEEVEEEEDDEDEYDKTVKEVHASGEVRIS). A compositionally biased stretch (gly residues) spans 310–319 (GGFGWGGNGD). Positions 322-347 (GKEEDAEDVEEEEEEVEEEEDDEDEY) are enriched in acidic residues. Over residues 348–363 (DKTVKEVHASGEVRIS) the composition is skewed to basic and acidic residues.

It belongs to the protein kinase superfamily. Ser/Thr protein kinase family. As to quaternary structure, interacts with TOPP1. Expressed in seedlings.

It carries out the reaction L-seryl-[protein] + ATP = O-phospho-L-seryl-[protein] + ADP + H(+). It catalyses the reaction L-threonyl-[protein] + ATP = O-phospho-L-threonyl-[protein] + ADP + H(+). The polypeptide is Serine/threonine-protein kinase SRK2A (SRK2A) (Arabidopsis thaliana (Mouse-ear cress)).